The following is a 134-amino-acid chain: Phosphoribosyl-AMP cyclohydrolase (134 aa).

Asp-80 contacts Mg(2+). Cys-81 serves as a coordination point for Zn(2+). Mg(2+) is bound by residues Asp-82 and Asp-84. Zn(2+) contacts are provided by Cys-98 and Cys-105.

Belongs to the PRA-CH family. Homodimer. Mg(2+) serves as cofactor. Zn(2+) is required as a cofactor.

It localises to the cytoplasm. The enzyme catalyses 1-(5-phospho-beta-D-ribosyl)-5'-AMP + H2O = 1-(5-phospho-beta-D-ribosyl)-5-[(5-phospho-beta-D-ribosylamino)methylideneamino]imidazole-4-carboxamide. It functions in the pathway amino-acid biosynthesis; L-histidine biosynthesis; L-histidine from 5-phospho-alpha-D-ribose 1-diphosphate: step 3/9. Functionally, catalyzes the hydrolysis of the adenine ring of phosphoribosyl-AMP. The chain is Phosphoribosyl-AMP cyclohydrolase from Bordetella pertussis (strain Tohama I / ATCC BAA-589 / NCTC 13251).